The following is a 562-amino-acid chain: Probable malate:quinone oxidoreductase (562 aa).

Belongs to the MQO family. FAD serves as cofactor.

It catalyses the reaction (S)-malate + a quinone = a quinol + oxaloacetate. Its pathway is carbohydrate metabolism; tricarboxylic acid cycle; oxaloacetate from (S)-malate (quinone route): step 1/1. In Stenotrophomonas maltophilia (strain K279a), this protein is Probable malate:quinone oxidoreductase.